Reading from the N-terminus, the 244-residue chain is MAVISMKQLLEAGVHFGHQTRRWNPKMARYIFTERNGIYIIDLQKTVRKVEEAYNYVRNLAADGGTVLFVGTKKQAQESVKEEAERCGMYYVNERWLGGMMTNFQTIQKRVSRLRELEKMEAEGVFEVLPKKEVAALRHEMEKLERFLGGIKSMKKLPDALFVVDPRKERIAVAEARRLNIPIVGIVDTNCDPDEIDVVIPANDDAIRAVKLLTGRIADAIIEGQQGSDEAEEAEEAAEEVVAE.

A disordered region spans residues 224–244 (GQQGSDEAEEAEEAAEEVVAE). The segment covering 229 to 244 (DEAEEAEEAAEEVVAE) has biased composition (acidic residues).

It belongs to the universal ribosomal protein uS2 family.

This Desulfitobacterium hafniense (strain DSM 10664 / DCB-2) protein is Small ribosomal subunit protein uS2.